We begin with the raw amino-acid sequence, 356 residues long: Protein RecA (356 aa).

77–84 (GPESSGKT) is an ATP binding site.

It belongs to the RecA family.

The protein localises to the cytoplasm. In terms of biological role, can catalyze the hydrolysis of ATP in the presence of single-stranded DNA, the ATP-dependent uptake of single-stranded DNA by duplex DNA, and the ATP-dependent hybridization of homologous single-stranded DNAs. It interacts with LexA causing its activation and leading to its autocatalytic cleavage. This chain is Protein RecA, found in Caulobacter vibrioides (strain ATCC 19089 / CIP 103742 / CB 15) (Caulobacter crescentus).